Here is a 728-residue protein sequence, read N- to C-terminus: FAD-dependent monooxygenase avaB (728 aa).

The chain crosses the membrane as a helical span at residues 17 to 37 (VIDLLLTFFFYSGLYGLIAAK). A compositionally biased stretch (polar residues) spans 50–64 (NQQCENTDDVPQSFQ). Positions 50–72 (NQQCENTDDVPQSFQRPRDTRST) are disordered. An FAD-binding site is contributed by V168. NADP(+) is bound at residue 490–491 (DL).

It belongs to the FAD-binding monooxygenase family. FAD is required as a cofactor.

It is found in the membrane. Its pathway is secondary metabolite metabolism. Its function is as follows. Multifunctional FAD-dependent monooxygenase; part of the cluster that mediates the biosynthesis of a highly modified cyclo-arginine-tryptophan dipeptide (cRW). Within the pathway, avaB uses the avaA cyclo-arginine-tryptophan dipeptide (cRW) as substrate to generate the cyclo-Arg-formylkynurenine diketopiperazine (DKP). AvaB also catalyzes an additional N-oxidation of the avaC product which is followed by cyclization and dehydration. The first step of the pathway is perfornmed by the arginine-containing cyclodipeptide synthase (RCPDS) avaA that acts as the scaffold-generating enzyme and is responsible for formation of the cyclo-Arg-Trp (cRW) diketopiperazine. AvaB then acts as a multifunctional flavoenzyme that is responsible for generating the cyclo-Arg-formylkynurenine DKP, which can be deformylated by avaC. AvaB then further catalyzes an additional N-oxidation followed by cyclization and dehydration. The next step is an N-acetylation of the guanidine group catalyzed by the arginine N-acetyltransferase avaD. The roles of the additional enzymes identified within the ava cluster still have to be determined. This chain is FAD-dependent monooxygenase avaB, found in Aspergillus versicolor.